A 523-amino-acid polypeptide reads, in one-letter code: Maturase K (523 aa).

This sequence belongs to the intron maturase 2 family. MatK subfamily.

The protein localises to the plastid. It is found in the chloroplast. Its function is as follows. Usually encoded in the trnK tRNA gene intron. Probably assists in splicing its own and other chloroplast group II introns. This is Maturase K from Asphodeline lutea (King's spear).